The chain runs to 99 residues: Small integral membrane protein 14 (99 aa).

The Lumenal portion of the chain corresponds to 1-49; that stretch reads MAEGGFDPCECVCSHEHAMRRLINLLRQSQSYCTDTECLQELPGPSGDN. Residues 50–70 form a helical membrane-spanning segment; sequence GISVTMILVAWMVIALILFLL. Over 71-99 the chain is Cytoplasmic; sequence RPPNLRGSSLPGKPTSPHNGQDPPAPPVD. The disordered stretch occupies residues 78-99; it reads SSLPGKPTSPHNGQDPPAPPVD.

The protein localises to the endoplasmic reticulum membrane. This Homo sapiens (Human) protein is Small integral membrane protein 14 (SMIM14).